The sequence spans 345 residues: 4-hydroxy-2-oxovalerate aldolase 1 (345 aa).

Residues 9 to 261 (IRVTDTSLRD…RTGIDFFAIA (253 aa)) form the Pyruvate carboxyltransferase domain. 17-18 (RD) provides a ligand contact to substrate. Residue Asp-18 coordinates Mn(2+). Residue His-21 is the Proton acceptor of the active site. Residues Ser-171 and His-200 each coordinate substrate. Mn(2+) is bound by residues His-200 and His-202. Tyr-291 serves as a coordination point for substrate.

The protein belongs to the 4-hydroxy-2-oxovalerate aldolase family.

The catalysed reaction is (S)-4-hydroxy-2-oxopentanoate = acetaldehyde + pyruvate. In Nocardia farcinica (strain IFM 10152), this protein is 4-hydroxy-2-oxovalerate aldolase 1.